The following is a 59-amino-acid chain: UPF0434 protein LHK_01103 (59 aa).

It belongs to the UPF0434 family.

In Laribacter hongkongensis (strain HLHK9), this protein is UPF0434 protein LHK_01103.